A 283-amino-acid chain; its full sequence is Biotin synthase (283 aa).

Positions 3-232 (KISNEIFLCS…NTRLMIAGGR (230 aa)) constitute a Radical SAM core domain. [4Fe-4S] cluster is bound by residues Cys21, Cys25, and Cys28. [2Fe-2S] cluster contacts are provided by Cys65, Cys100, and Arg225.

It belongs to the radical SAM superfamily. Biotin synthase family. Homodimer. The cofactor is [4Fe-4S] cluster. Requires [2Fe-2S] cluster as cofactor.

The catalysed reaction is (4R,5S)-dethiobiotin + (sulfur carrier)-SH + 2 reduced [2Fe-2S]-[ferredoxin] + 2 S-adenosyl-L-methionine = (sulfur carrier)-H + biotin + 2 5'-deoxyadenosine + 2 L-methionine + 2 oxidized [2Fe-2S]-[ferredoxin]. It functions in the pathway cofactor biosynthesis; biotin biosynthesis; biotin from 7,8-diaminononanoate: step 2/2. In terms of biological role, catalyzes the conversion of dethiobiotin (DTB) to biotin by the insertion of a sulfur atom into dethiobiotin via a radical-based mechanism. The chain is Biotin synthase from Helicobacter hepaticus (strain ATCC 51449 / 3B1).